A 147-amino-acid chain; its full sequence is Large ribosomal subunit protein bL9 (147 aa).

This sequence belongs to the bacterial ribosomal protein bL9 family.

Its function is as follows. Binds to the 23S rRNA. The sequence is that of Large ribosomal subunit protein bL9 from Flavobacterium psychrophilum (strain ATCC 49511 / DSM 21280 / CIP 103535 / JIP02/86).